The following is a 266-amino-acid chain: Glucosamine-6-phosphate deaminase (266 aa).

D72 serves as the catalytic Proton acceptor; for enolization step. D141 functions as the For ring-opening step in the catalytic mechanism. H143 (proton acceptor; for ring-opening step) is an active-site residue. The active-site For ring-opening step is the E148.

It belongs to the glucosamine/galactosamine-6-phosphate isomerase family. NagB subfamily. In terms of assembly, homohexamer.

It catalyses the reaction alpha-D-glucosamine 6-phosphate + H2O = beta-D-fructose 6-phosphate + NH4(+). It participates in amino-sugar metabolism; N-acetylneuraminate degradation; D-fructose 6-phosphate from N-acetylneuraminate: step 5/5. Allosterically activated by N-acetylglucosamine 6-phosphate (GlcNAc6P). In terms of biological role, catalyzes the reversible isomerization-deamination of glucosamine 6-phosphate (GlcN6P) to form fructose 6-phosphate (Fru6P) and ammonium ion. In Pectobacterium atrosepticum (strain SCRI 1043 / ATCC BAA-672) (Erwinia carotovora subsp. atroseptica), this protein is Glucosamine-6-phosphate deaminase.